An 856-amino-acid chain; its full sequence is MRVKEKYQHLWRWGWRWGTMLLGMLMICSATEKLWVTVYYGVPVWKEATTTLFCASDAKAYDTEVHNVWATHACVPTDPNPQEVVLVNVTENFNMWKNDMVEQMHEDIISLWDQSLKPCVKLTPLCVSLKCTDLKNDTNTNSSSGRMIMEKGEIKNCSFNISTSIRGKVQKEYAFFYKLDIIPIDNDTTSYKLTSCNTSVITQACPKVSFEPIPIHYCAPAGFAILKCNNKTFNGTGPCTNVSTVQCTHGIRPVVSTQLLLNGSLAEEEVVIRSVNFTDNAKTIIVQLNTSVEINCTRPNNNTRKRIRIQRGPGRAFVTIGKIGNMRQAHCNISRAKWNNTLKQIASKLREQFGNNKTIIFKQSSGGDPEIVTHSFNCGGEFFYCNSTQLFNSTWFNSTWSTEGSNNTEGSDTITLPCRIKQIINMWQKVGKAMYAPPISGQIRCSSNITGLLLTRDGGNSNNESEIFRPGGGDMRDNWRSELYKYKVVKIEPLGVAPTKAKRRVVQREKRAVGIGALFLGFLGAAGSTMGAASMTLTVQARQLLSGIVQQQNNLLRAIEAQQHLLQLTVWGIKQLQARILAVERYLKDQQLLGIWGCSGKLICTTAVPWNASWSNKSLEQIWNHTTWMEWDREINNYTSLIHSLIEESQNQQEKNEQELLELDKWASLWNWFNITNWLWYIKLFIMIVGGLVGLRIVFAVLSIVNRVRQGYSPLSFQTHLPTPRGPDRPEGIEEEGGERDRDRSIRLVNGSLALIWDDLRSLCLFSYHRLRDLLLIVTRIVELLGRRGWEALKYWWNLLQYWSQELKNSAVSLLNATAIAVAEGTDRVIEVVQGACRAIRHIPRRIRQGLERILL.

Positions Met-1–Glu-32 are cleaved as a signal peptide. The Extracellular segment spans residues Lys-33–Leu-684. Cysteines 54 and 74 form a disulfide. Asn-88, Asn-136, Asn-141, Asn-156, Asn-160, Asn-186, Asn-197, Asn-230, Asn-234, Asn-241, Asn-262, Asn-276, Asn-289, Asn-295, Asn-301, Asn-332, Asn-339, and Asn-356 each carry an N-linked (GlcNAc...) asparagine; by host glycan. Cystine bridges form between Cys-119/Cys-205, Cys-126/Cys-196, Cys-131/Cys-157, Cys-218/Cys-247, and Cys-228/Cys-239. A V1 region spans residues Cys-131–Asn-156. The V2 stretch occupies residues Cys-157–Cys-196. The tract at residues Cys-296–His-330 is V3. Cys-296 and Cys-331 are oxidised to a cystine. The interval Ser-364 to His-374 is CD4-binding loop. Cystine bridges form between Cys-378/Cys-445 and Cys-385/Cys-418. The segment at Cys-385 to Cys-418 is V4. Asn-386, Asn-392, Asn-397, Asn-406, Asn-448, and Asn-463 each carry an N-linked (GlcNAc...) asparagine; by host glycan. 2 V5 regions span residues Ser-461–Gly-471 and Asn-463–Gly-471. A fusion peptide region spans residues Ala-512–Ala-532. Residues Lys-574–Leu-592 form an immunosuppression region. A disulfide bridge connects residues Cys-598 and Cys-604. N-linked (GlcNAc...) asparagine; by host glycosylation is found at Asn-611, Asn-616, Asn-624, Asn-637, and Asn-674. A coiled-coil region spans residues Arg-633 to Ala-667. The tract at residues Glu-662–Lys-683 is MPER; binding to GalCer. Residues Phe-685–Val-705 traverse the membrane as a helical segment. At Asn-706–Leu-856 the chain is on the cytoplasmic side. The short motif at Tyr-712–Leu-715 is the YXXL motif; contains endocytosis signal element. The interval Gln-718–Arg-742 is disordered. S-palmitoyl cysteine; by host attachment occurs at residues Cys-764 and Cys-837. Positions Leu-855–Leu-856 match the Di-leucine internalization motif motif.

This sequence belongs to the HIV-1 env protein family. In terms of assembly, the mature envelope protein (Env) consists of a homotrimer of non-covalently associated gp120-gp41 heterodimers. The resulting complex protrudes from the virus surface as a spike. There seems to be as few as 10 spikes on the average virion. Interacts with host CD4, CCR5 and CXCR4. Gp120 also interacts with the C-type lectins CD209/DC-SIGN and CLEC4M/DC-SIGNR (collectively referred to as DC-SIGN(R)). Gp120 and gp41 interact with GalCer. Gp120 interacts with host ITGA4/ITGB7 complex; on CD4+ T-cells, this interaction results in rapid activation of integrin ITGAL/LFA-1, which facilitates efficient cell-to-cell spreading of HIV-1. Gp120 interacts with cell-associated heparan sulfate; this interaction increases virus infectivity on permissive cells and may be involved in infection of CD4- cells. As to quaternary structure, the mature envelope protein (Env) consists of a homotrimer of non-covalently associated gp120-gp41 heterodimers. The resulting complex protrudes from the virus surface as a spike. There seems to be as few as 10 spikes on the average virion. Post-translationally, palmitoylation of the transmembrane protein and of Env polyprotein (prior to its proteolytic cleavage) is essential for their association with host cell membrane lipid rafts. Palmitoylation is therefore required for envelope trafficking to classical lipid rafts, but not for viral replication. Highly glycosylated by host. The high number of glycan on the protein is reffered to as 'glycan shield' because it contributes to hide protein sequence from adaptive immune system. In terms of processing, specific enzymatic cleavages in vivo yield mature proteins. Envelope glycoproteins are synthesized as an inactive precursor that is heavily N-glycosylated and processed likely by host cell furin in the Golgi to yield the mature SU and TM proteins. The cleavage site between SU and TM requires the minimal sequence [KR]-X-[KR]-R. About 2 of the 9 disulfide bonds of gp41 are reduced by P4HB/PDI, following binding to CD4 receptor.

Its subcellular location is the virion membrane. It is found in the host cell membrane. The protein localises to the host endosome membrane. Oligomerizes in the host endoplasmic reticulum into predominantly trimers. In a second time, gp160 transits in the host Golgi, where glycosylation is completed. The precursor is then proteolytically cleaved in the trans-Golgi and thereby activated by cellular furin or furin-like proteases to produce gp120 and gp41. Functionally, attaches the virus to the host lymphoid cell by binding to the primary receptor CD4. This interaction induces a structural rearrangement creating a high affinity binding site for a chemokine coreceptor like CXCR4 and/or CCR5. Acts as a ligand for CD209/DC-SIGN and CLEC4M/DC-SIGNR, which are respectively found on dendritic cells (DCs), and on endothelial cells of liver sinusoids and lymph node sinuses. These interactions allow capture of viral particles at mucosal surfaces by these cells and subsequent transmission to permissive cells. HIV subverts the migration properties of dendritic cells to gain access to CD4+ T-cells in lymph nodes. Virus transmission to permissive T-cells occurs either in trans (without DCs infection, through viral capture and transmission), or in cis (following DCs productive infection, through the usual CD4-gp120 interaction), thereby inducing a robust infection. In trans infection, bound virions remain infectious over days and it is proposed that they are not degraded, but protected in non-lysosomal acidic organelles within the DCs close to the cell membrane thus contributing to the viral infectious potential during DCs' migration from the periphery to the lymphoid tissues. On arrival at lymphoid tissues, intact virions recycle back to DCs' cell surface allowing virus transmission to CD4+ T-cells. Its function is as follows. Acts as a class I viral fusion protein. Under the current model, the protein has at least 3 conformational states: pre-fusion native state, pre-hairpin intermediate state, and post-fusion hairpin state. During fusion of viral and target intracellular membranes, the coiled coil regions (heptad repeats) assume a trimer-of-hairpins structure, positioning the fusion peptide in close proximity to the C-terminal region of the ectodomain. The formation of this structure appears to drive apposition and subsequent fusion of viral and target cell membranes. Complete fusion occurs in host cell endosomes and is dynamin-dependent, however some lipid transfer might occur at the plasma membrane. The virus undergoes clathrin-dependent internalization long before endosomal fusion, thus minimizing the surface exposure of conserved viral epitopes during fusion and reducing the efficacy of inhibitors targeting these epitopes. Membranes fusion leads to delivery of the nucleocapsid into the cytoplasm. The protein is Envelope glycoprotein gp160 of Homo sapiens (Human).